The chain runs to 262 residues: Small ribosomal subunit protein uS2 (262 aa).

The disordered stretch occupies residues 224–262 (GKQGQDDAQQETADDNAANETVSEDSLKNLKNSVEGKED).

It belongs to the universal ribosomal protein uS2 family.

This Limosilactobacillus reuteri (strain DSM 20016) (Lactobacillus reuteri) protein is Small ribosomal subunit protein uS2.